A 40-amino-acid chain; its full sequence is MADTTGRIPLWVIGTVAGILVIGLIGIFFYGSYSGLGSSL.

The helical transmembrane segment at 8–28 threads the bilayer; the sequence is IPLWVIGTVAGILVIGLIGIF.

The protein belongs to the PsbJ family. As to quaternary structure, PSII is composed of 1 copy each of membrane proteins PsbA, PsbB, PsbC, PsbD, PsbE, PsbF, PsbH, PsbI, PsbJ, PsbK, PsbL, PsbM, PsbT, PsbX, PsbY, PsbZ, Psb30/Ycf12, at least 3 peripheral proteins of the oxygen-evolving complex and a large number of cofactors. It forms dimeric complexes.

It is found in the plastid. The protein localises to the chloroplast thylakoid membrane. Functionally, one of the components of the core complex of photosystem II (PSII). PSII is a light-driven water:plastoquinone oxidoreductase that uses light energy to abstract electrons from H(2)O, generating O(2) and a proton gradient subsequently used for ATP formation. It consists of a core antenna complex that captures photons, and an electron transfer chain that converts photonic excitation into a charge separation. The polypeptide is Photosystem II reaction center protein J (Lepidium virginicum (Virginia pepperweed)).